Here is a 450-residue protein sequence, read N- to C-terminus: UDP-N-acetylmuramoylalanine--D-glutamate ligase (450 aa).

Glycine 115–threonine 121 lines the ATP pocket.

Belongs to the MurCDEF family.

The protein localises to the cytoplasm. The enzyme catalyses UDP-N-acetyl-alpha-D-muramoyl-L-alanine + D-glutamate + ATP = UDP-N-acetyl-alpha-D-muramoyl-L-alanyl-D-glutamate + ADP + phosphate + H(+). It participates in cell wall biogenesis; peptidoglycan biosynthesis. Cell wall formation. Catalyzes the addition of glutamate to the nucleotide precursor UDP-N-acetylmuramoyl-L-alanine (UMA). The sequence is that of UDP-N-acetylmuramoylalanine--D-glutamate ligase from Caldanaerobacter subterraneus subsp. tengcongensis (strain DSM 15242 / JCM 11007 / NBRC 100824 / MB4) (Thermoanaerobacter tengcongensis).